The sequence spans 384 residues: Galactokinase (384 aa).

Residue 34–37 (EHTD) coordinates substrate. 123 to 129 (SSGLSSS) contacts ATP. Mg(2+) contacts are provided by S129 and E161. The Proton acceptor role is filled by D173. Y222 lines the substrate pocket.

The protein belongs to the GHMP kinase family. GalK subfamily.

It localises to the cytoplasm. The catalysed reaction is alpha-D-galactose + ATP = alpha-D-galactose 1-phosphate + ADP + H(+). Its pathway is carbohydrate metabolism; galactose metabolism. Functionally, catalyzes the transfer of the gamma-phosphate of ATP to D-galactose to form alpha-D-galactose-1-phosphate (Gal-1-P). The polypeptide is Galactokinase (Actinobacillus pleuropneumoniae (Haemophilus pleuropneumoniae)).